The primary structure comprises 327 residues: Polyadenylate-binding protein-interacting protein 9 (327 aa).

A PAM2-like motif is present at residues 59–69; that stretch reads KLNPLAKEFFP. Residues 97–113 are compositionally biased toward basic and acidic residues; sequence KQSGEEFDLDAKKDDNT. The segment at 97–132 is disordered; the sequence is KQSGEEFDLDAKKDDNTRKRRNYSQGRRRLTGRISK. The Bipartite nuclear localization signal motif lies at 114-125; it reads RKRRNYSQGRRR. Basic residues predominate over residues 114-127; sequence RKRRNYSQGRRRLT. RRM domains follow at residues 141–216 and 238–314; these read RTVY…PSKT and RTIY…PSKT. Residues 308 to 327 are disordered; it reads RVSPSKTPVRPRITRPPSTN.

It localises to the nucleus. This is Polyadenylate-binding protein-interacting protein 9 (CID9) from Arabidopsis thaliana (Mouse-ear cress).